The following is a 116-amino-acid chain: Co-chaperonin GroES (116 aa).

It belongs to the GroES chaperonin family. Heptamer of 7 subunits arranged in a ring. Interacts with the chaperonin GroEL.

Its subcellular location is the cytoplasm. Its function is as follows. Together with the chaperonin GroEL, plays an essential role in assisting protein folding. The GroEL-GroES system forms a nano-cage that allows encapsulation of the non-native substrate proteins and provides a physical environment optimized to promote and accelerate protein folding. GroES binds to the apical surface of the GroEL ring, thereby capping the opening of the GroEL channel. The protein is Co-chaperonin GroES of Mycoplasma pneumoniae (strain ATCC 29342 / M129 / Subtype 1) (Mycoplasmoides pneumoniae).